Consider the following 104-residue polypeptide: Large ribosomal subunit protein bL21c (104 aa).

This sequence belongs to the bacterial ribosomal protein bL21 family. As to quaternary structure, part of the 50S ribosomal subunit.

It localises to the plastid. Its subcellular location is the chloroplast. Its function is as follows. This protein binds to 23S rRNA. This chain is Large ribosomal subunit protein bL21c, found in Guillardia theta (Cryptophyte).